Consider the following 77-residue polypeptide: Acyl carrier protein (77 aa).

One can recognise a Carrier domain in the interval 1–76 (MATFDDVKAV…DVVNYIDNLK (76 aa)). Ser36 is subject to O-(pantetheine 4'-phosphoryl)serine.

This sequence belongs to the acyl carrier protein (ACP) family. Post-translationally, 4'-phosphopantetheine is transferred from CoA to a specific serine of apo-ACP by AcpS. This modification is essential for activity because fatty acids are bound in thioester linkage to the sulfhydryl of the prosthetic group.

The protein localises to the cytoplasm. Its pathway is lipid metabolism; fatty acid biosynthesis. Its function is as follows. Carrier of the growing fatty acid chain in fatty acid biosynthesis. The protein is Acyl carrier protein of Campylobacter jejuni (strain RM1221).